Reading from the N-terminus, the 381-residue chain is tRNA pseudouridine synthase D (381 aa).

The active-site Nucleophile is Asp-81. Positions Gly-160–Val-335 constitute a TRUD domain.

This sequence belongs to the pseudouridine synthase TruD family.

The catalysed reaction is uridine(13) in tRNA = pseudouridine(13) in tRNA. In terms of biological role, responsible for synthesis of pseudouridine from uracil-13 in transfer RNAs. The polypeptide is tRNA pseudouridine synthase D (Helicobacter pylori (strain G27)).